A 385-amino-acid chain; its full sequence is Probable thioesterase PNKD (385 aa).

Polar residues predominate over residues Asn31 to Gln42. The interval Asn31–Ser57 is disordered. Residues His172, His174, Asp176, His177, His229, Asp253, and His291 each contribute to the Zn(2+) site.

The protein belongs to the metallo-beta-lactamase superfamily. Glyoxalase II family. It depends on Zn(2+) as a cofactor. In terms of processing, undergoes cleavage at the N-terminus.

The protein resides in the cell membrane. Its subcellular location is the mitochondrion. It carries out the reaction a thioester + H2O = a thiol + a carboxylate + H(+). Probable thioesterase that may play a role in cellular detoxification processes; it likely acts on a yet-unknown alpha-hydroxythioester substrate. In vitro, it is able to catalyze the hydrolysis of S-D-lactoyl-glutathione to form glutathione and D-lactic acid at very low rate, though this reaction is not physiologically relevant in vivo. This is Probable thioesterase PNKD (PNKD) from Bos taurus (Bovine).